The primary structure comprises 211 residues: ATP-dependent dethiobiotin synthetase BioD (211 aa).

13–18 is a binding site for ATP; that stretch reads GVGKTV. Residue T17 participates in Mg(2+) binding. The active site involves K33. Mg(2+)-binding residues include C47 and E101. ATP contacts are provided by residues 101-104, 185-187, and N192; these read EGAG and PWL.

It belongs to the dethiobiotin synthetase family. Homodimer. It depends on Mg(2+) as a cofactor.

The protein localises to the cytoplasm. It carries out the reaction (7R,8S)-7,8-diammoniononanoate + CO2 + ATP = (4R,5S)-dethiobiotin + ADP + phosphate + 3 H(+). It functions in the pathway cofactor biosynthesis; biotin biosynthesis; biotin from 7,8-diaminononanoate: step 1/2. Catalyzes a mechanistically unusual reaction, the ATP-dependent insertion of CO2 between the N7 and N8 nitrogen atoms of 7,8-diaminopelargonic acid (DAPA, also called 7,8-diammoniononanoate) to form a ureido ring. This Bradyrhizobium diazoefficiens (strain JCM 10833 / BCRC 13528 / IAM 13628 / NBRC 14792 / USDA 110) protein is ATP-dependent dethiobiotin synthetase BioD.